We begin with the raw amino-acid sequence, 523 residues long: Ribonuclease Y (523 aa).

A helical transmembrane segment spans residues 3–23 (VWYAIGSIIFGLLVGVSVYLI). The KH domain maps to 213 to 279 (LVNVINLPND…TKTIEKLVED (67 aa)). The region spanning 339-432 (ALGHSIEVAN…VCAADTLSAA (94 aa)) is the HD domain.

It belongs to the RNase Y family.

Its subcellular location is the cell membrane. Functionally, endoribonuclease that initiates mRNA decay. The protein is Ribonuclease Y of Helicobacter hepaticus (strain ATCC 51449 / 3B1).